The following is a 522-amino-acid chain: 2-isopropylmalate synthase (522 aa).

A Pyruvate carboxyltransferase domain is found at 5–267 (VIIFDTTLRD…HTRINHQEIY (263 aa)). The Mn(2+) site is built by D14, H202, H204, and N238. The interval 392 to 522 (RLDTFNVQSG…SQVKDQKETV (131 aa)) is regulatory domain.

The protein belongs to the alpha-IPM synthase/homocitrate synthase family. LeuA type 1 subfamily. As to quaternary structure, homodimer. Requires Mn(2+) as cofactor.

It localises to the cytoplasm. It carries out the reaction 3-methyl-2-oxobutanoate + acetyl-CoA + H2O = (2S)-2-isopropylmalate + CoA + H(+). It participates in amino-acid biosynthesis; L-leucine biosynthesis; L-leucine from 3-methyl-2-oxobutanoate: step 1/4. Functionally, catalyzes the condensation of the acetyl group of acetyl-CoA with 3-methyl-2-oxobutanoate (2-ketoisovalerate) to form 3-carboxy-3-hydroxy-4-methylpentanoate (2-isopropylmalate). This Erwinia tasmaniensis (strain DSM 17950 / CFBP 7177 / CIP 109463 / NCPPB 4357 / Et1/99) protein is 2-isopropylmalate synthase.